The primary structure comprises 123 residues: Pre-B lymphocyte protein 3 (123 aa).

A signal peptide spans 1–20; it reads MACRCLSFLLMGTFLSVSQT. Residues 21–123 form the Ig-like domain; sequence VLAQLDALLV…YCSVGYGFSP (103 aa). Cysteine 40 and cysteine 115 are joined by a disulfide.

Belongs to the immunoglobulin superfamily. In terms of tissue distribution, expressed in B-cell precursors. Expressed in fetal liver, bone marrow, spleen and lymph node.

Associates with the Ig-mu chain to form a molecular complex that is expressed on the surface of pre-B-cells. The sequence is that of Pre-B lymphocyte protein 3 (VPREB3) from Homo sapiens (Human).